The chain runs to 212 residues: Putative 3-methyladenine DNA glycosylase (212 aa).

This sequence belongs to the DNA glycosylase MPG family.

The chain is Putative 3-methyladenine DNA glycosylase from Frankia casuarinae (strain DSM 45818 / CECT 9043 / HFP020203 / CcI3).